We begin with the raw amino-acid sequence, 194 residues long: Large ribosomal subunit protein bL9 (194 aa).

It belongs to the bacterial ribosomal protein bL9 family.

In terms of biological role, binds to the 23S rRNA. The sequence is that of Large ribosomal subunit protein bL9 from Rhodopseudomonas palustris (strain BisA53).